A 335-amino-acid chain; its full sequence is Selenide, water dikinase (335 aa).

The active site involves selenocysteine 7. Residue selenocysteine 7 is a non-standard amino acid, selenocysteine. ATP contacts are provided by residues lysine 10 and 36–38 (LGD). A Mg(2+)-binding site is contributed by aspartate 39. Residues aspartate 55, aspartate 78, and 126–128 (GHT) each bind ATP. Mg(2+) is bound at residue aspartate 78. A Mg(2+)-binding site is contributed by aspartate 232.

It belongs to the selenophosphate synthase 1 family. Class I subfamily. As to quaternary structure, homodimer. It depends on Mg(2+) as a cofactor.

It catalyses the reaction hydrogenselenide + ATP + H2O = selenophosphate + AMP + phosphate + 2 H(+). In terms of biological role, synthesizes selenophosphate from selenide and ATP. This chain is Selenide, water dikinase, found in Methanococcus maripaludis (strain DSM 14266 / JCM 13030 / NBRC 101832 / S2 / LL).